The chain runs to 450 residues: Tubulin alpha-1 chain (450 aa).

Gln-11 is a binding site for GTP. Lys-40 is subject to N6-acetyllysine. 7 residues coordinate GTP: Glu-71, Ser-140, Gly-144, Thr-145, Thr-179, Asn-206, and Asn-228. Glu-71 contacts Mg(2+). Glu-254 is an active-site residue.

Belongs to the tubulin family. In terms of assembly, dimer of alpha and beta chains. A typical microtubule is a hollow water-filled tube with an outer diameter of 25 nm and an inner diameter of 15 nM. Alpha-beta heterodimers associate head-to-tail to form protofilaments running lengthwise along the microtubule wall with the beta-tubulin subunit facing the microtubule plus end conferring a structural polarity. Microtubules usually have 13 protofilaments but different protofilament numbers can be found in some organisms and specialized cells. Interacts with Ote. Mg(2+) serves as cofactor. Post-translationally, undergoes a tyrosination/detyrosination cycle, the cyclic removal and re-addition of a C-terminal tyrosine residue by the enzymes tubulin tyrosine carboxypeptidase (TTCP) and tubulin tyrosine ligase (TTL), respectively. In terms of processing, acetylation of alpha chains at Lys-40 stabilizes microtubules and affects affinity and processivity of microtubule motors. This modification has a role in multiple cellular functions, ranging from cell motility, cell cycle progression or cell differentiation to intracellular trafficking and signaling. During the early stages of oogenesis lky/Alpha-tubulin N-acetyltransferase 2 is the main acetyltransferase responsible for Lys-40 acetylation in germline cells while Atat/alpha-tubulin N-acetyltransferase 1 is the main acetyltransferase responsible for Lys-40 acetylation in somatic cells.

The protein localises to the cytoplasm. The protein resides in the cytoskeleton. It catalyses the reaction GTP + H2O = GDP + phosphate + H(+). Functionally, tubulin is the major constituent of microtubules, a cylinder consisting of laterally associated linear protofilaments composed of alpha- and beta-tubulin heterodimers. Microtubules grow by the addition of GTP-tubulin dimers to the microtubule end, where a stabilizing cap forms. Below the cap, tubulin dimers are in GDP-bound state, owing to GTPase activity of alpha-tubulin. The polypeptide is Tubulin alpha-1 chain (alphaTub84B) (Drosophila melanogaster (Fruit fly)).